The sequence spans 329 residues: Meiotic drive suppressor wtf21 (329 aa).

The segment at 1–68 (MKNNYTSLKS…RENNPSRSTD (68 aa)) is disordered. Over residues 19–30 (KTDHEIDLEKGP) the composition is skewed to basic and acidic residues. Helical transmembrane passes span 73-95 (FLIKLLISFTPIYVLNVLAICYL), 110-132 (WTLFGFWCLVCTLALIFLTYFYE), 165-182 (IIIWILWLIICCILFVYI), 192-214 (ALICSTCTISAVLLLIVSSVCIP), and 290-312 (GIAFILGGIGNAMMGLANAIRGA).

This sequence belongs to the WTF family. Homomer. Interacts with other proteins that exhibit high sequence similarity.

Its subcellular location is the spore membrane. The protein resides in the vacuole membrane. Acts as a suppressor component of the dual wtf meiotic drive system, and can suppress but not confer meiotic drive by compatible poisons. Wtf meiotic drive systems promote unequal transmission of alleles from the parental zygote to progeny spores by encoding a poison and an antidote from the same locus; the poison is trans-acting and forms toxic aggregates in all spores within an ascus, wherease the antidote is spore-specific and targets aggregates for degradation by the vacuole. Meiotic drive by wtf systems therefore lead to poisoning of all progeny that do not inherit the dual poison/antidote allele, or express a compatible antidote. The sequence is that of Meiotic drive suppressor wtf21 from Schizosaccharomyces pombe (strain 972 / ATCC 24843) (Fission yeast).